A 92-amino-acid chain; its full sequence is Probable Fe(2+)-trafficking protein (92 aa).

The protein belongs to the Fe(2+)-trafficking protein family.

Its function is as follows. Could be a mediator in iron transactions between iron acquisition and iron-requiring processes, such as synthesis and/or repair of Fe-S clusters in biosynthetic enzymes. The sequence is that of Probable Fe(2+)-trafficking protein from Shewanella woodyi (strain ATCC 51908 / MS32).